Here is a 543-residue protein sequence, read N- to C-terminus: MEMFCYQCQETLRNEACVAQGVCGKSPETANLQDLLIYVLKGISYWANKARELNVEDESVDLFVAEGLFVTITNVNFDEGRIVEYIDEAVDKRRIIENKFKEVYEKKYNEKFQEKVPDAAVWNPKDNNEDEYLNKAVEVGVLSESDEDIRSLKNFLVIGLKGVAAYTDHAYILKHSNDDILAFIEKALAETLREDITVDELMNLVLKIGEYGVNAMALLDEANTSTFGNPEITQVYTGTYETPAILVSGHDLLDLYEILEQTKGKGIKVYTHGEMLPANAYPGLKKYEHLAGNFGGSWWKQQQEFEDFGGAVVMTTNCIQKPRNSYKDRIFTTGLVGWPDVQHIPNRKKDGQKDFTPVIQKALEIGPIKKREGKAITIGFAHEQTAQVADKIVEAVKSGKITKFYVMGGCDGRNKDREYYTNFAKDLPKSAVILTAGCAKYRYNMLDLGDIDGIPRVIDAGQCNDSYSLVLTALKLKEAFDLKDINELPIEYNIAWYEQKAVTVLLSLLYMGVKGIRLGPTLPAFLSPNVLETVAKTFDIKTI.

[4Fe-4S] cluster is bound by residues Cys-5, Cys-8, Cys-17, and Cys-23. Hybrid [4Fe-2O-2S] cluster is bound by residues His-250, Glu-274, Cys-318, Cys-410, Cys-438, Cys-463, Glu-498, and Lys-500. Cys-410 bears the Cysteine persulfide mark.

This sequence belongs to the HCP family. Requires [4Fe-4S] cluster as cofactor. It depends on hybrid [4Fe-2O-2S] cluster as a cofactor.

It localises to the cytoplasm. It carries out the reaction A + NH4(+) + H2O = hydroxylamine + AH2 + H(+). Its function is as follows. Catalyzes the reduction of hydroxylamine to form NH(3) and H(2)O. In Petrotoga mobilis (strain DSM 10674 / SJ95), this protein is Hydroxylamine reductase.